A 262-amino-acid polypeptide reads, in one-letter code: Cytochrome c oxidase subunit 2 (262 aa).

2 helical membrane passes run 31-51 and 72-92; these read HIMF…YVII and IIWT…SFIL. Cu cation is bound by residues H175, C210, E212, C214, H218, and M221. E212 is a Mg(2+) binding site.

This sequence belongs to the cytochrome c oxidase subunit 2 family. Component of the cytochrome c oxidase (complex IV, CIV), a multisubunit enzyme composed of a catalytic core of 3 subunits and several supernumerary subunits. The complex exists as a monomer or a dimer and forms supercomplexes (SCs) in the inner mitochondrial membrane with ubiquinol-cytochrome c oxidoreductase (cytochrome b-c1 complex, complex III, CIII). Cu cation serves as cofactor.

It localises to the mitochondrion inner membrane. The enzyme catalyses 4 Fe(II)-[cytochrome c] + O2 + 8 H(+)(in) = 4 Fe(III)-[cytochrome c] + 2 H2O + 4 H(+)(out). Component of the cytochrome c oxidase, the last enzyme in the mitochondrial electron transport chain which drives oxidative phosphorylation. The respiratory chain contains 3 multisubunit complexes succinate dehydrogenase (complex II, CII), ubiquinol-cytochrome c oxidoreductase (cytochrome b-c1 complex, complex III, CIII) and cytochrome c oxidase (complex IV, CIV), that cooperate to transfer electrons derived from NADH and succinate to molecular oxygen, creating an electrochemical gradient over the inner membrane that drives transmembrane transport and the ATP synthase. Cytochrome c oxidase is the component of the respiratory chain that catalyzes the reduction of oxygen to water. Electrons originating from reduced cytochrome c in the intermembrane space (IMS) are transferred via the dinuclear copper A center (CU(A)) of subunit 2 and heme A of subunit 1 to the active site in subunit 1, a binuclear center (BNC) formed by heme A3 and copper B (CU(B)). The BNC reduces molecular oxygen to 2 water molecules using 4 electrons from cytochrome c in the IMS and 4 protons from the mitochondrial matrix. In Candida albicans (strain SC5314 / ATCC MYA-2876) (Yeast), this protein is Cytochrome c oxidase subunit 2 (COX2).